A 451-amino-acid chain; its full sequence is MGKYFGTDGVRGEANVELTPELAFKLGRFGGYVLSQHETERPKVFVARDTRISGEMLESALIAGLLSVGIEVYKLGVLATPGVSYLVRTEKASAGVMISASHNPALDNGIKFFGNDGFKLADDQELEIEALLDAPEDTLPRPSAEGLGTLVDYPEGLRKYEKFLVTTGTDLSGMTVALDTANGAASVSARDVFLDLNAEIAVIGEKPNGLNINDGVGSTHPEQLQELVKETGADLGLAFDGDSDRLIAVDETGEIVDGDRIMFIIGKYLSEKGLLAHNTIVTTVMSNLGFHKALDKQGINKAITAVGDRYVVEEMRSSGYNLGGEQSGHVIIMDYNTTGDGQLTAIQLAKVMKETGKSLSELAAEVTIYPQKLVNIRVENSMKDRAMEVPAIANIIAKMEDEMAGNGRILVRPSGTEPLLRVMAEAPTDAEVDYYVDTIADVVRTEIGCDN.

Catalysis depends on Ser-101, which acts as the Phosphoserine intermediate. 4 residues coordinate Mg(2+): Ser-101, Asp-240, Asp-242, and Asp-244. Residue Ser-101 is modified to Phosphoserine.

The protein belongs to the phosphohexose mutase family. Mg(2+) serves as cofactor. In terms of processing, activated by phosphorylation.

It catalyses the reaction alpha-D-glucosamine 1-phosphate = D-glucosamine 6-phosphate. Functionally, catalyzes the conversion of glucosamine-6-phosphate to glucosamine-1-phosphate. This is Phosphoglucosamine mutase from Streptococcus pyogenes serotype M2 (strain MGAS10270).